We begin with the raw amino-acid sequence, 198 residues long: Suppressor of cytokine signaling 2 (198 aa).

The segment at 1-29 (MTLRCLEPSGNGADRTRSQWGTAGLPEEQ) is disordered. An interaction with AREL1 region spans residues 1–75 (MTLRCLEPSG…PEGTFLIRDS (75 aa)). At Ser-30 the chain carries Phosphoserine. Residues 48–156 (WYWGSMTVNE…TVHLYLTKPL (109 aa)) form the SH2 domain. Ser-52 is subject to Phosphoserine; by PKC. The region spanning 151–197 (YLTKPLYTSAPTLQHFCRLAINKCTGTIWGLPLPTRLKDYLEEYKFQ) is the SOCS box domain. Lys-173 participates in a covalent cross-link: Glycyl lysine isopeptide (Lys-Gly) (interchain with G-Cter in ubiquitin).

Substrate-recognition component of the ECS(SOCS2) complex, composed of SOCS2, CUL5, ELOB, ELOC and RNF7/RBX2. Interacts with IGF1R. Interacts with DCUN1D1. Ubiquitinated; mediated by AREL1 and leading to its subsequent proteasomal degradation. Ubiquitination is dependent on phosphorylation at Ser-52, by PKC and is stimulated by LPS. Post-translationally, phosphorylation at Ser-52 by PKC facilitates its ubiquitination and proteasomal degradation. In terms of tissue distribution, expressed primarily in the testis, some expression in liver and lung.

The protein resides in the cytoplasm. It functions in the pathway protein modification; protein ubiquitination. Its function is as follows. Substrate-recognition component of a cullin-5-RING E3 ubiquitin-protein ligase complex (ECS complex, also named CRL5 complex), which mediates the ubiquitination and subsequent proteasomal degradation of target proteins, such as EPOR and GHR. Specifically recognizes and binds phosphorylated proteins via its SH2 domain, promoting their ubiquitination. The ECS(SOCS2) complex acts as a key regulator of growth hormone receptor (GHR) levels by mediating ubiquitination and degradation of GHR, following GHR phosphorylation by JAK2. The ECS(SOCS2) also catalyzes ubiquitination and degradation of JAK2-phosphorylated EPOR. The chain is Suppressor of cytokine signaling 2 from Mus musculus (Mouse).